An 86-amino-acid chain; its full sequence is Putative membrane protein insertion efficiency factor (86 aa).

This sequence belongs to the UPF0161 family.

The protein resides in the cell inner membrane. In terms of biological role, could be involved in insertion of integral membrane proteins into the membrane. The chain is Putative membrane protein insertion efficiency factor from Ruegeria sp. (strain TM1040) (Silicibacter sp.).